Consider the following 194-residue polypeptide: Phosphoheptose isomerase (194 aa).

Residues 37–194 (ISNSFKQGGK…LIEFEMAKQA (158 aa)) form the SIS domain. 52–54 (NGG) is a substrate binding site. 2 residues coordinate Zn(2+): His-61 and Glu-65. Residues Glu-65, 93–94 (ND), 119–121 (STS), Ser-124, and Gln-172 each bind substrate. Residues Gln-172 and His-180 each contribute to the Zn(2+) site.

This sequence belongs to the SIS family. GmhA subfamily. In terms of assembly, homotetramer. Zn(2+) serves as cofactor.

The protein resides in the cytoplasm. It catalyses the reaction 2 D-sedoheptulose 7-phosphate = D-glycero-alpha-D-manno-heptose 7-phosphate + D-glycero-beta-D-manno-heptose 7-phosphate. It participates in carbohydrate biosynthesis; D-glycero-D-manno-heptose 7-phosphate biosynthesis; D-glycero-alpha-D-manno-heptose 7-phosphate and D-glycero-beta-D-manno-heptose 7-phosphate from sedoheptulose 7-phosphate: step 1/1. Functionally, catalyzes the isomerization of sedoheptulose 7-phosphate in D-glycero-D-manno-heptose 7-phosphate. The protein is Phosphoheptose isomerase of Haemophilus influenzae (strain PittGG).